The primary structure comprises 346 residues: MGKIHRPRRGSLAYSPRKRAKSIVPRIRSWPKDSEVRMLGFAGYKAGMTHILMIDDSPGLTKGKEIFVPVTIVEVPPLFVYGIRAYKQGYLGLETATEVWFHDLHKNVARRIKTLPKNYNEEAFQAKLGQLEDLVNDGEIADVRLLVHTQPWLIGLKKKPEVMEYAIGGDDVKAKFDYAKEKIGKELRAGEVLHEGELLDVIAVTKGKGTQGPVKRWGVKVQFHKAQRAGKGRHIGNLGPWHPARVMWTVPQAGQMGFHHRTEFNKRLIAIGENGKLVLDGNEIEITPKGGFPHYGIVRSDFLMIEGTIPGSFKRIIRVRPAIRPPKKKPPVERPQITYVSRESKQ.

The tract at residues 324 to 346 (RPPKKKPPVERPQITYVSRESKQ) is disordered.

This sequence belongs to the universal ribosomal protein uL3 family. As to quaternary structure, part of the 50S ribosomal subunit. Forms a cluster with proteins L14 and L24e.

One of the primary rRNA binding proteins, it binds directly near the 3'-end of the 23S rRNA, where it nucleates assembly of the 50S subunit. This Thermococcus kodakarensis (strain ATCC BAA-918 / JCM 12380 / KOD1) (Pyrococcus kodakaraensis (strain KOD1)) protein is Large ribosomal subunit protein uL3.